The chain runs to 339 residues: Cathepsin B (339 aa).

A signal peptide spans M1 to A17. A propeptide spans R18–K79 (activation peptide). 6 disulfides stabilise this stretch: C93-C122, C105-C150, C141-C207, C142-C146, C179-C211, and C187-C198. The active site involves C108. The N-linked (GlcNAc...) asparagine glycan is linked to N192. K220 carries the post-translational modification N6-acetyllysine. Catalysis depends on residues H278 and N298. The propeptide occupies Q334–I339.

It belongs to the peptidase C1 family. Dimer of a heavy chain and a light chain cross-linked by a disulfide bond. Interacts with SRPX2. Directly interacts with SHKBP1.

Its subcellular location is the lysosome. The protein resides in the melanosome. It localises to the secreted. It is found in the extracellular space. The protein localises to the apical cell membrane. The enzyme catalyses Hydrolysis of proteins with broad specificity for peptide bonds. Preferentially cleaves -Arg-Arg-|-Xaa bonds in small molecule substrates (thus differing from cathepsin L). In addition to being an endopeptidase, shows peptidyl-dipeptidase activity, liberating C-terminal dipeptides.. Its function is as follows. Thiol protease which is believed to participate in intracellular degradation and turnover of proteins. Cleaves matrix extracellular phosphoglycoprotein MEPE. Involved in the solubilization of cross-linked TG/thyroglobulin in the thyroid follicle lumen. Has also been implicated in tumor invasion and metastasis. This chain is Cathepsin B (CTSB), found in Macaca fascicularis (Crab-eating macaque).